Here is a 101-residue protein sequence, read N- to C-terminus: Transcription factor ILI2 (101 aa).

The disordered stretch occupies residues Met-1–Glu-22. One can recognise a bHLH domain in the interval Arg-8–Leu-63.

It belongs to the bHLH protein family.

Functionally, atypical and probable non DNA-binding bHLH transcription factor that integrates multiple signaling pathways to regulate cell elongation and plant development. The sequence is that of Transcription factor ILI2 (ILI2) from Oryza sativa subsp. indica (Rice).